Here is a 1007-residue protein sequence, read N- to C-terminus: Aldehyde reductase lnbA (1007 aa).

Residues 35 to 428 form an adenylation (A) domain region; the sequence is QVRQSPSSIA…GRVDHQIKVR (394 aa). Residues 540–617 enclose the Carrier domain; the sequence is TLCQDTQTVL…ALASIIDHAK (78 aa). At serine 577 the chain carries O-(pantetheine 4'-phosphoryl)serine. The tract at residues 659–998 is short-chain dehydrogenase/reductase (R) domain; it reads IFITGATGFV…PTLDCSLLKK (340 aa).

This sequence belongs to the NRP synthetase family.

It carries out the reaction L-tyrosinal + AMP + diphosphate + NADP(+) = L-tyrosine + ATP + NADPH + H(+). It functions in the pathway secondary metabolite biosynthesis. Functionally, non-canonical nonribosomal peptide synthetase; part of the lnb gene cluster that mediates the biosynthesis of diastereomeric piperazines. Lna and lnb clusters encode sets of enzymes that produce overlapping sets of previously undescribed metabolites such as piperazinomycin-like metabolites or morpholine. The lna and lnb biosynthetic pathways appear to be part of a signaling network that controls the formation of sclerotia, a resilient overwintering structure. One primary function of the non-canonical nonribosomal peptide synthetases lnaA and lnbA consists in the reduction of L-tyrosine. The presence in the clusters of tailoring enzymes such as the oxidoreductases lnaB, lnbB, lnaE or lnbE, as well as of the cytochrome P450 monooxygenases lnaC, lnaD, or lnbC, might explain formation of various diastereomeric piperazines. In Aspergillus flavus (strain ATCC 200026 / FGSC A1120 / IAM 13836 / NRRL 3357 / JCM 12722 / SRRC 167), this protein is Aldehyde reductase lnbA.